Here is a 248-residue protein sequence, read N- to C-terminus: 3-deoxy-manno-octulosonate cytidylyltransferase (248 aa).

Belongs to the KdsB family.

It localises to the cytoplasm. It carries out the reaction 3-deoxy-alpha-D-manno-oct-2-ulosonate + CTP = CMP-3-deoxy-beta-D-manno-octulosonate + diphosphate. Its pathway is nucleotide-sugar biosynthesis; CMP-3-deoxy-D-manno-octulosonate biosynthesis; CMP-3-deoxy-D-manno-octulosonate from 3-deoxy-D-manno-octulosonate and CTP: step 1/1. It functions in the pathway bacterial outer membrane biogenesis; lipopolysaccharide biosynthesis. Activates KDO (a required 8-carbon sugar) for incorporation into bacterial lipopolysaccharide in Gram-negative bacteria. The protein is 3-deoxy-manno-octulosonate cytidylyltransferase of Chlorobaculum tepidum (strain ATCC 49652 / DSM 12025 / NBRC 103806 / TLS) (Chlorobium tepidum).